The primary structure comprises 84 residues: uncharacterized protein (84 aa).

The segment at 1-21 is disordered; it reads MYYRRQGEPQEMYGNGNNSVS. A helical transmembrane segment spans residues 49 to 69; sequence YIIYAIVAAILLLLFWLLYKK.

Its subcellular location is the membrane. This is an uncharacterized protein from Invertebrate iridescent virus 6 (IIV-6).